The following is a 561-amino-acid chain: Putative transport protein YbjL (561 aa).

5 helical membrane-spanning segments follow: residues 8-28 (LLNGNYILLLFVVLALGLCLG), 32-52 (LGSVQLGNSIGVLVVSLLLGQ), 66-86 (FMLFIFCVGVEAGPNFFSIFF), 94-114 (MLALVMVGSALLIALGLGKLF), and 158-178 (NLSLGYALTYLIGLVSLIVGA). RCK C-terminal domains lie at 200–288 (RGLD…SFRN) and 292–373 (VFDR…RIGF). Helical transmembrane passes span 383–403 (LLAFCAFFIIGLMIGMITFQF), 406–426 (FSFGIGNAAGLLFAGIMLGFL), 447–467 (FGLMVFMAGVGLSAGSGISNG), 475–495 (MLIAGLVVSLIPVVICFLFGA), and 540–560 (AIANVLLTLAGTLIVIIWPGL).

The protein belongs to the AAE transporter (TC 2.A.81) family. YbjL subfamily.

Its subcellular location is the cell membrane. The polypeptide is Putative transport protein YbjL (Salmonella typhi).